The primary structure comprises 403 residues: Na(+)/H(+) antiporter NhaH (403 aa).

Residues 1–6 (MHGFHD) are Cytoplasmic-facing. Residues 7–27 (VFIQILLLLAISVSVIAIAKL) traverse the membrane as a helical segment. The Extracellular portion of the chain corresponds to 28 to 30 (LKE). The chain crosses the membrane as a helical span at residues 31–51 (PDSIALVLVGLVLGLTELPII). The Cytoplasmic portion of the chain corresponds to 52–65 (EDAERYITQSEVFQ). A helical membrane pass occupies residues 66-86 (ATIISLFLPILLGDATLKLPF). The Extracellular portion of the chain corresponds to 87–98 (HHLFSQKKTVLG). Residues 99–119 (LAFVGTFVSSICIGTAAYFLL) form a helical membrane-spanning segment. The Cytoplasmic segment spans residues 120-124 (DLPLA). A helical membrane pass occupies residues 125–145 (VAFTFAALMSATDPISVLSIF). The Extracellular segment spans residues 146 to 167 (KSLGVPQKMSTVMEGESLFNDG). A helical membrane pass occupies residues 168 to 188 (IAVVLFKIASIYLLTYMEMGW). The Cytoplasmic segment spans residues 189 to 195 (AGLGSGV). A helical transmembrane segment spans residues 196-216 (FLFLKFAIGGALVGLVLGYFF). The Extracellular portion of the chain corresponds to 217-218 (SQ). Residues 219-239 (VIRVFDDYPLEVAFSALLFFG) traverse the membrane as a helical segment. Residues 240 to 241 (SY) lie on the Cytoplasmic side of the membrane. The helical transmembrane segment at 242 to 262 (FIAEHFHTSGVIAVVVGGFVF) threads the bilayer. The Extracellular portion of the chain corresponds to 263 to 281 (GDYGAKIGMSKETKTNINT). Residues 282-302 (FWDSVTLIANALIFLMVGLEI) traverse the membrane as a helical segment. Residues 303–310 (RNIDLAGN) lie on the Cytoplasmic side of the membrane. Residues 311-331 (WGVIVGAILIVLVGRTIAVYL) traverse the membrane as a helical segment. Over 332–372 (GTGWVQELSSKERLLINWGGLRGSLSVALALSLPMDFAGRD) the chain is Extracellular. Residues 373–393 (QVLLLTFSVVLFSLIVQGLTL) traverse the membrane as a helical segment. Residues 394-403 (KPLIKKLGMI) lie on the Cytoplasmic side of the membrane.

The protein belongs to the monovalent cation:proton antiporter 1 (CPA1) transporter (TC 2.A.36) family.

It localises to the cell membrane. Functionally, na(+)/H(+) antiporter that extrudes sodium in exchange for external protons. Can also transport lithium. The polypeptide is Na(+)/H(+) antiporter NhaH (nhaH) (Halobacillus dabanensis).